Here is a 148-residue protein sequence, read N- to C-terminus: Large ribosomal subunit protein uL15 (148 aa).

A disordered region spans residues 1-51 (MNLSNLKPAEGSTKTRKRIGRGPGSGLGGTSTRGHKGAKSRSGYSKKIGFE). A compositionally biased stretch (gly residues) spans 21 to 31 (RGPGSGLGGTS).

It belongs to the universal ribosomal protein uL15 family. Part of the 50S ribosomal subunit.

Its function is as follows. Binds to the 23S rRNA. This is Large ribosomal subunit protein uL15 from Phocaeicola vulgatus (strain ATCC 8482 / DSM 1447 / JCM 5826 / CCUG 4940 / NBRC 14291 / NCTC 11154) (Bacteroides vulgatus).